A 3374-amino-acid chain; its full sequence is Abnormal spindle-like microcephaly-associated protein homolog (3374 aa).

Ser212, Ser215, Ser300, and Ser325 each carry phosphoserine. Positions 492–518 (SSKNIVTPPCKAASVARKRKSKGHTGD) are disordered. Ser540 is modified (phosphoserine). The 137-residue stretch at 855-991 (KASXDILLAF…LLWKIALAFQ (137 aa)) folds into the Calponin-homology (CH) 1 domain. Positions 992–1013 (VDISLNLDQLKEEIDFLKKTQS) form a coiled coil. At Ser1038 the chain carries Phosphoserine. The 152-residue stretch at 1045-1196 (SESVKLLMDW…YLSFLCARLL (152 aa)) folds into the Calponin-homology (CH) 2 domain. 41 IQ domains span residues 1201–1230 (ETRAARLIQTTWRQYKLKKDLKHHQERDKA), 1282–1313 (HSKSASIIQRYWRRYSTRKQFLKLKYYSIILQ), 1472–1503 (KRAAAIRLQAAFRGRRARNLCKQIRAACVLQS), 1567–1596 (TRSAVIVLQSACRRMQARKKFLHILTAVVK), 1590–1619 (ILTAVVKIQSYYRAYASRRKFLRLKKATVK), 1613–1642 (LKKATVKLQSIVRMKQARKQYLHLRAIAQQ), 1647–1678 (LRASCIKLQAFLRGYLVRKQVRLQRKAAVLLQ), 1720–1749 (VRRAVTCLQAAYRGYKVRRQLQQQSAAALK), 1743–1772 (QSAAALKIQAAFRGYRQRTKYQSMLQSALK), 1793–1822 (TRTAAISLQSAYRGWKVRKQMRKEHEAAVK), 1816–1847 (EHEAAVKIQSAFRTARAQKEFRLLKTAASVIQ), 1866–1897 (LRRAAVTLQSAWRGRAARRRIQKQQRCAIIIQ), 1939–1968 (TKGAAIILQSAFRGVRARKKVKEMHQAATT), 1962–1993 (MHQAATTIQSRYRAYQARKKYASYRAAAVIIQ), 2012–2043 (VKKAALKIQAVYRGVRERRQTRRMHMAATLIK), 2035–2066 (MHMAATLIKAAFKMQQSRRRYQQMRTAAIVIQ), 2085–2116 (TLKAVALLQAALRGARVRQNLRRMRTAATLIQ), 2108–2137 (MRTAATLIQAHYRGRRQQAYFNKLKKVTKT), 2158–2189 (LRRSAICIQAAFRGMRARKRLKAMHSAAAVIQ), 2181–2212 (MHSAAAVIQRRFRTLVMRRRFLSLRKTAVWVQ), 2230–2261 (LQKAAIKIQSWYRGWMVRKKTQEMRRAATVLQ), 2253–2284 (MRRAATVLQAAFRRHRARARYQAWRRASQVIQ), 2303–2334 (QXRSALVLQAAFRGMRIRRRLKRMHASATLIQ), 2326–2357 (MHASATLIQSRFRSVRVRKRFLSLKKAAVFVQ), 2376–2407 (LKKAIIIIQAFYRRRMVKKQLQEMHRAAALIQ), 2399–2430 (MHRAAALIQASFRMHRARLAFQTWKLAXVLIQ), 2449–2480 (WRHSAVVIQAAYKGLKARQLLREKHRAAVIIQ), 2472–2503 (KHRAAVIIQSTYRMYRQHFSYQKLQWATKVIQ), 2542–2573 (QHQAAITVQKHFRAFKTRKRYLHFRAKVVFVQ), 2583–2612 (RTQAAICIQSCFRGFKARRGIQGMHLAATR), 2606–2637 (MHLAATRIQSCYRRHRARADYQAKKRAVVVIQ), 2656–2685 (IQKSARTIQAAFRGMKVRQKLKTMPDEKMA), 2732–2763 (QRKAAVTIQKAFRKMVTRRLEKQRSAAVQIQS), 2777–2806 (QKRAALTLQRYFRTQQSRKRFLLYREAAVG), 2827–2856 (IRSSVIIIQARVKGFIQKRKFRKLKDSTIK), 2850–2881 (LKDSTIKIQAVWRRHKARKYLREVKAACRIQA), 2872–2903 (EVKAACRIQAWYRCRKARKEYLAVLRAVRIIQ), 2947–2976 (RHQAACLIQANFRGYKARQVFLQQKSAALT), 2997–3028 (LKKSTVVLQALVRGWLVRKRISEQRAKIRLLH), 3099–3128 (HSRAASVIQRAVRHFLLRKKQENLNKRIAK), and 3122–3153 (LNKRIAKIQALWRGYSWRKKNDTSKTKAIRQR).

It localises to the cytoplasm. The protein localises to the cytoskeleton. It is found in the spindle. The protein resides in the nucleus. Its function is as follows. Probable role in mitotic spindle regulation and coordination of mitotic processes. May have a preferential role in regulating neurogenesis. The polypeptide is Abnormal spindle-like microcephaly-associated protein homolog (ASPM) (Ovis aries (Sheep)).